Reading from the N-terminus, the 173-residue chain is Photosystem I assembly protein Ycf3 (173 aa).

TPR repeat units lie at residues Ala35–Thr68, Gly72–Leu105, and Gly120–Asn153.

It belongs to the Ycf3 family.

Its subcellular location is the cellular thylakoid membrane. Functionally, essential for the assembly of the photosystem I (PSI) complex. May act as a chaperone-like factor to guide the assembly of the PSI subunits. The chain is Photosystem I assembly protein Ycf3 from Nostoc sp. (strain PCC 7120 / SAG 25.82 / UTEX 2576).